The chain runs to 160 residues: Single-stranded DNA-binding protein 2 (160 aa).

Residues 2 to 104 enclose the SSB domain; that stretch reads MNRVVLVGRL…VVAESVQFLE (103 aa). Residues 107-160 are disordered; it reads NNNVEGATSNNYQNKANYSNNNQTSSYRADTSQKSDSFASEGKPIDINEDDLPF. Over residues 115–129 the composition is skewed to low complexity; that stretch reads SNNYQNKANYSNNNQ. Over residues 130–144 the composition is skewed to polar residues; sequence TSSYRADTSQKSDSF. Positions 155–160 match the Important for interaction with partner proteins motif; that stretch reads EDDLPF.

Homotetramer.

Functionally, plays an important role in DNA replication, recombination and repair. Binds to ssDNA and to an array of partner proteins to recruit them to their sites of action during DNA metabolism. The chain is Single-stranded DNA-binding protein 2 (ssb2) from Listeria monocytogenes serovar 1/2a (strain ATCC BAA-679 / EGD-e).